Reading from the N-terminus, the 543-residue chain is Hydroxylamine reductase (543 aa).

4 residues coordinate [4Fe-4S] cluster: Cys3, Cys6, Cys15, and Cys21. Residues His244, Glu268, Cys312, Cys399, Cys427, Cys452, Glu486, and Lys488 each coordinate hybrid [4Fe-2O-2S] cluster. Position 399 is a cysteine persulfide (Cys399).

Belongs to the HCP family. Requires [4Fe-4S] cluster as cofactor. The cofactor is hybrid [4Fe-2O-2S] cluster.

It is found in the cytoplasm. It carries out the reaction A + NH4(+) + H2O = hydroxylamine + AH2 + H(+). In terms of biological role, catalyzes the reduction of hydroxylamine to form NH(3) and H(2)O. This Methanocella arvoryzae (strain DSM 22066 / NBRC 105507 / MRE50) protein is Hydroxylamine reductase.